The chain runs to 403 residues: MSKFNRIHLVVLDSVGIGAAPDADKFFNAGVADTDSDTLGHISETAGLSVPNMAKIGLGNISRPIPLKTVPTEDNPTGYVTKLEEVSLGKDTMTGHWEIMGLNITEPFDTFWNGFPEEILTKIEEFSGRKIIREANKPYSGTAVIDDFGSRQMETGELIVYTSADPVLQIAAHEDIIPVEELYKICEYARSITLERPALLGRIIARPYVGEPGNFTRTANRHDYAVSPFQDTVLNKLADAGVPTYAVGKINDIFNGSGITNDMGHNKSNSHGIDTLIKTLQLPEFTKGFSFTNLVDFDANFGHRRDPEGYRDCLHEFDNRLPEIIANMKEDDLLLITADHGNDPTYAGTDHTREYIPLLAYSASFTGNGLIPQGHFADISATVAENFGVDIAMIGESFLGHLK.

Residues aspartate 13, aspartate 298, histidine 303, aspartate 339, histidine 340, and histidine 351 each contribute to the Mn(2+) site.

Belongs to the phosphopentomutase family. The cofactor is Mn(2+).

Its subcellular location is the cytoplasm. It carries out the reaction 2-deoxy-alpha-D-ribose 1-phosphate = 2-deoxy-D-ribose 5-phosphate. The catalysed reaction is alpha-D-ribose 1-phosphate = D-ribose 5-phosphate. It functions in the pathway carbohydrate degradation; 2-deoxy-D-ribose 1-phosphate degradation; D-glyceraldehyde 3-phosphate and acetaldehyde from 2-deoxy-alpha-D-ribose 1-phosphate: step 1/2. Isomerase that catalyzes the conversion of deoxy-ribose 1-phosphate (dRib-1-P) and ribose 1-phosphate (Rib-1-P) to deoxy-ribose 5-phosphate (dRib-5-P) and ribose 5-phosphate (Rib-5-P), respectively. This Streptococcus pyogenes serotype M28 (strain MGAS6180) protein is Phosphopentomutase.